The chain runs to 553 residues: Serine/threonine-protein phosphatase 2B catalytic subunit A1 (553 aa).

Residue S2 is modified to N-acetylserine. Fe cation contacts are provided by D119, H121, and D147. Residues D147 and N179 each contribute to the Zn(2+) site. H180 functions as the Proton donor in the catalytic mechanism. The Zn(2+) site is built by H228 and H317. Residues 413-447 (LDPESEPKAAEETVKARANATKETGTPSDEKASSA) form a disordered region. The span at 417 to 427 (SEPKAAEETVK) shows a compositional bias: basic and acidic residues.

This sequence belongs to the PPP phosphatase family. PP-2B subfamily. As to quaternary structure, composed of two components (A and B), the A component is the catalytic subunit and the B component confers calcium sensitivity. Requires Fe(3+) as cofactor. It depends on Zn(2+) as a cofactor.

It catalyses the reaction O-phospho-L-seryl-[protein] + H2O = L-seryl-[protein] + phosphate. It carries out the reaction O-phospho-L-threonyl-[protein] + H2O = L-threonyl-[protein] + phosphate. In terms of biological role, calcium-dependent, calmodulin-stimulated protein phosphatase. This subunit may have a role in the calmodulin activation of calcineurin. The sequence is that of Serine/threonine-protein phosphatase 2B catalytic subunit A1 (CNA1) from Saccharomyces cerevisiae (strain ATCC 204508 / S288c) (Baker's yeast).